The sequence spans 34 residues: Mytilin-B (34 aa).

4 disulfides stabilise this stretch: Cys2–Cys27, Cys6–Cys29, Cys10–Cys31, and Cys15–Cys34.

The protein resides in the secreted. In terms of biological role, has antibacterial and antiviral activity. The polypeptide is Mytilin-B (Mytilus edulis (Blue mussel)).